A 165-amino-acid chain; its full sequence is Phosphopantetheine adenylyltransferase (165 aa).

Substrate is bound at residue Thr10. ATP-binding positions include 10–11 (TF) and His18. Residues Lys42, Leu75, and Arg89 each contribute to the substrate site. ATP contacts are provided by residues 90 to 92 (GVR), Glu100, and 125 to 131 (VSFISSS).

This sequence belongs to the bacterial CoaD family. Homohexamer. Mg(2+) is required as a cofactor.

Its subcellular location is the cytoplasm. It carries out the reaction (R)-4'-phosphopantetheine + ATP + H(+) = 3'-dephospho-CoA + diphosphate. The protein operates within cofactor biosynthesis; coenzyme A biosynthesis; CoA from (R)-pantothenate: step 4/5. Functionally, reversibly transfers an adenylyl group from ATP to 4'-phosphopantetheine, yielding dephospho-CoA (dPCoA) and pyrophosphate. This is Phosphopantetheine adenylyltransferase from Buchnera aphidicola subsp. Schizaphis graminum (strain Sg).